A 134-amino-acid chain; its full sequence is uncharacterized protein (134 aa).

The helical transmembrane segment at 110 to 130 threads the bilayer; it reads SLGVLTDILFLVLYSLLIHLS.

Its subcellular location is the membrane. This is an uncharacterized protein from Saccharomyces cerevisiae (strain ATCC 204508 / S288c) (Baker's yeast).